Reading from the N-terminus, the 420-residue chain is MDKIVIKGGQALHGEVQASGAKNAALPILASALLADGTSTYRNVPALADVATMLKVLRTMGCDAERDSETTDVCRVGVNGHITPEAPYDLVKTMRASVLVLGPLVARFGRARVSMPGGCAIGARPIDQHLKGLKALGADIHLTEGYVEATAKQLKGGTVNFDVITVTGTENVMMAAVLAKGRTLMENCAREPEVEELAKVLNKMGARIEGAGTSSITIEGVDGLKPVEHAILPDRIEAGTLLVAAAISGGDVLVKRVVPEHMDALVEKLREAGCTITTEGSGLRCKAPQRLDAVNITTTEHPGFPTDMQAQLMALMSVSQGTSVISENIFENRFMHVPELHRLGADITIQGPTAVVKGVKGLSGAPVMATDLRASASLILAGLRAEGRTDVSRVYHLDRGYERLERKLSALGADIRREKA.

22 to 23 (KN) serves as a coordination point for phosphoenolpyruvate. Arg95 is a UDP-N-acetyl-alpha-D-glucosamine binding site. Catalysis depends on Cys119, which acts as the Proton donor. Cys119 carries the 2-(S-cysteinyl)pyruvic acid O-phosphothioketal modification. UDP-N-acetyl-alpha-D-glucosamine contacts are provided by residues 124 to 128 (RPIDQ), Asp307, and Ile329.

The protein belongs to the EPSP synthase family. MurA subfamily.

The protein resides in the cytoplasm. It catalyses the reaction phosphoenolpyruvate + UDP-N-acetyl-alpha-D-glucosamine = UDP-N-acetyl-3-O-(1-carboxyvinyl)-alpha-D-glucosamine + phosphate. It participates in cell wall biogenesis; peptidoglycan biosynthesis. Its function is as follows. Cell wall formation. Adds enolpyruvyl to UDP-N-acetylglucosamine. This chain is UDP-N-acetylglucosamine 1-carboxyvinyltransferase, found in Myxococcus xanthus (strain DK1622).